We begin with the raw amino-acid sequence, 132 residues long: MWNEFKKFAFKGNVVDLAVGVVIGAAFGKIVSSLVKDIITPLLGMVLGGVDFTSLHFGYGKSAVMYGNFIQTIFDFLIIAASIFMFVKVFNKLTSKKEEEKEEEIPEPTKEEVLLSEIRDLLKQQNSSKDRA.

3 helical membrane passes run Val-14–Leu-34, Ile-38–Gly-58, and Gly-67–Val-87.

Belongs to the MscL family. Homopentamer.

The protein localises to the cell membrane. Channel that opens in response to stretch forces in the membrane lipid bilayer. May participate in the regulation of osmotic pressure changes within the cell. This chain is Large-conductance mechanosensitive channel, found in Bacillus cereus (strain ATCC 10987 / NRS 248).